The following is a 489-amino-acid chain: tRNA(Ile)-lysidine synthase (489 aa).

Residue 35–40 coordinates ATP; the sequence is SGGLDS.

This sequence belongs to the tRNA(Ile)-lysidine synthase family.

Its subcellular location is the cytoplasm. The catalysed reaction is cytidine(34) in tRNA(Ile2) + L-lysine + ATP = lysidine(34) in tRNA(Ile2) + AMP + diphosphate + H(+). Ligates lysine onto the cytidine present at position 34 of the AUA codon-specific tRNA(Ile) that contains the anticodon CAU, in an ATP-dependent manner. Cytidine is converted to lysidine, thus changing the amino acid specificity of the tRNA from methionine to isoleucine. In Burkholderia mallei (strain ATCC 23344), this protein is tRNA(Ile)-lysidine synthase.